Here is a 730-residue protein sequence, read N- to C-terminus: Diacylglycerol kinase alpha (730 aa).

2 EF-hand domains span residues 111-146 (RPED…MMRV) and 156-191 (ELRP…TVPL). Positions 124, 126, 128, 135, 169, 171, 173, 175, and 180 each coordinate Ca(2+). 2 consecutive Phorbol-ester/DAG-type zinc fingers follow at residues 206–254 (NHIW…AQPC) and 270–320 (SHLW…GPEC). In terms of domain architecture, DAGKc spans 368–501 (SNTHPLLVFI…LDRWFLEVIP (134 aa)). An N6-acetyllysine modification is found at Lys479.

It belongs to the eukaryotic diacylglycerol kinase family. As to quaternary structure, monomer.

Its subcellular location is the cytoplasm. The protein resides in the cytosol. It catalyses the reaction a 1,2-diacyl-sn-glycerol + ATP = a 1,2-diacyl-sn-glycero-3-phosphate + ADP + H(+). It carries out the reaction a 1-O-alkyl-sn-glycerol + ATP = a 1-O-alkyl-sn-glycero-3-phosphate + ADP + H(+). The enzyme catalyses 1-O-alkyl-2-acyl-sn-glycerol + ATP = 1-O-alkyl-2-acyl-sn-glycero-3-phosphate + ADP + H(+). The catalysed reaction is 1,2-dihexadecanoyl-sn-glycerol + ATP = 1,2-dihexadecanoyl-sn-glycero-3-phosphate + ADP + H(+). It catalyses the reaction 1-hexadecanoyl-2-(9Z-octadecenoyl)-sn-glycerol + ATP = 1-hexadecanoyl-2-(9Z-octadecenoyl)-sn-glycero-3-phosphate + ADP + H(+). It carries out the reaction 2-(9Z-octadecenoyl)-glycerol + ATP = 2-(9Z-octadecenoyl)-sn-glycero-3-phosphate + ADP + H(+). The enzyme catalyses 1,2-di-(9Z-octadecenoyl)-sn-glycerol + ATP = 1,2-di-(9Z-octadecenoyl)-sn-glycero-3-phosphate + ADP + H(+). The catalysed reaction is 1-octadecanoyl-2-(5Z,8Z,11Z,14Z-eicosatetraenoyl)-sn-glycerol + ATP = 1-octadecanoyl-2-(5Z,8Z,11Z,14Z-eicosatetraenoyl)-sn-glycero-3-phosphate + ADP + H(+). It catalyses the reaction 1,2-didecanoyl-sn-glycerol + ATP = 1,2-didecanoyl-sn-glycero-3-phosphate + ADP + H(+). It carries out the reaction 1-O-hexadecyl-2-acetyl-sn-glycerol + ATP = 1-O-hexadecyl-2-acetyl-sn-glycero-3-phosphate + ADP + H(+). The enzyme catalyses 1-O-hexadecyl-2-(5Z,8Z,11Z,14Z-eicosatetraenoyl)-sn-glycerol + ATP = 1-O-hexadecyl-2-(5Z,8Z,11Z,14Z-eicosatetraenoyl)-sn-glycero-3-phosphate + ADP + H(+). The catalysed reaction is 1-O-hexadecyl-2-(9Z-octadecenoyl)-sn-glycerol + ATP = 1-O-hexadecyl-2-(9Z-octadecenoyl)-sn-glycero-3-phosphate + ADP + H(+). It catalyses the reaction 1-O-hexadecyl-sn-glycerol + ATP = 1-O-hexadecyl-sn-glycero-3-phosphate + ADP + H(+). Its pathway is lipid metabolism; glycerolipid metabolism. Stimulated by calcium and phosphatidylserine. In terms of biological role, diacylglycerol kinase that converts diacylglycerol/DAG into phosphatidic acid/phosphatidate/PA and regulates the respective levels of these two bioactive lipids. Thereby, acts as a central switch between the signaling pathways activated by these second messengers with different cellular targets and opposite effects in numerous biological processes. Also plays an important role in the biosynthesis of complex lipids. Can also phosphorylate 1-alkyl-2-acylglycerol in vitro as efficiently as diacylglycerol provided it contains an arachidonoyl group. Also involved in the production of alkyl-lysophosphatidic acid, another bioactive lipid, through the phosphorylation of 1-alkyl-2-acetyl glycerol. The chain is Diacylglycerol kinase alpha (Dgka) from Mus musculus (Mouse).